A 1048-amino-acid chain; its full sequence is NACHT, LRR and PYD domains-containing protein 8 (1048 aa).

A disordered region spans residues 1 to 23 (MSDVNPPSDTPIPFSSSSTHSSH). Residues 11 to 23 (PIPFSSSSTHSSH) show a composition bias toward low complexity. The region spanning 33–131 (PGSPCENGVM…NAILPTLEPE (99 aa)) is the Pyrin domain. The NACHT domain maps to 204–527 (KTVAIQGAPG…FYVLCFPQRL (324 aa)). Residue 210–217 (GAPGIGKT) participates in ATP binding. LRR repeat units lie at residues 815–838 (NGHLKTLILRKNSLENCGAYYLSV), 839–861 (AQLERLSIENCNLTQLTCESLAS), 866–890 (SKMLTHLSLAENALKDEGAKHIWNA), 923–950 (NKTLKSLDLSFNSLKDDGVILLCEALKN), and 980–1007 (NQHLRHLDLSKNAIGVYGILTLCEAFSS). Positions 1029 to 1048 (PTPHPPDFTGKSDCLSQINP) are disordered.

It belongs to the NLRP family.

It is found in the cytoplasm. Its function is as follows. Involved in inflammation. This is NACHT, LRR and PYD domains-containing protein 8 (NLRP8) from Homo sapiens (Human).